A 341-amino-acid polypeptide reads, in one-letter code: NADH-quinone oxidoreductase subunit H (341 aa).

8 helical membrane passes run 38–58, 70–90, 115–135, 161–181, 187–207, 239–259, 275–295, and 314–334; these read PSVV…KLLV, ILFI…WAVI, IGVL…IVAG, MGLI…GEMV, MPFW…ISLL, LFFL…TIFF, IPGL…FVWT, and VFLP…LFTG.

Belongs to the complex I subunit 1 family. As to quaternary structure, NDH-1 is composed of 14 different subunits. Subunits NuoA, H, J, K, L, M, N constitute the membrane sector of the complex.

Its subcellular location is the cell membrane. The catalysed reaction is a quinone + NADH + 5 H(+)(in) = a quinol + NAD(+) + 4 H(+)(out). In terms of biological role, NDH-1 shuttles electrons from NADH, via FMN and iron-sulfur (Fe-S) centers, to quinones in the respiratory chain. The immediate electron acceptor for the enzyme in this species is believed to be ubiquinone. Couples the redox reaction to proton translocation (for every two electrons transferred, four hydrogen ions are translocated across the cytoplasmic membrane), and thus conserves the redox energy in a proton gradient. This subunit may bind ubiquinone. The protein is NADH-quinone oxidoreductase subunit H of Wolbachia sp. subsp. Brugia malayi (strain TRS).